Consider the following 167-residue polypeptide: Peptidoglycan-binding-like protein (167 aa).

The signal sequence occupies residues Met-1–Ala-24.

This sequence belongs to the IagB/IpgF/P19 family.

It is found in the periplasm. In Escherichia coli O157:H7, this protein is Peptidoglycan-binding-like protein (pbl).